A 104-amino-acid polypeptide reads, in one-letter code: Small ribosomal subunit protein uS10 (104 aa).

Belongs to the universal ribosomal protein uS10 family. Part of the 30S ribosomal subunit.

Its function is as follows. Involved in the binding of tRNA to the ribosomes. The chain is Small ribosomal subunit protein uS10 from Aliarcobacter butzleri (strain RM4018) (Arcobacter butzleri).